The sequence spans 131 residues: Auxin-responsive protein SAUR77 (131 aa).

It belongs to the ARG7 family.

May be involved in the regulation of ethylene receptor signaling. Promotes cell expansion and plant growth. In Arabidopsis thaliana (Mouse-ear cress), this protein is Auxin-responsive protein SAUR77.